The sequence spans 851 residues: Venom phosphodiesterase 1 (851 aa).

The signal sequence occupies residues methionine 1 to glycine 23. SMB domains lie at proline 30–threonine 73 and glutamine 74–serine 118. Intrachain disulfides connect cysteine 34–cysteine 38, cysteine 34–cysteine 51, cysteine 38–cysteine 69, cysteine 49–cysteine 51, cysteine 49–cysteine 62, cysteine 55–cysteine 61, cysteine 62–cysteine 69, cysteine 78–cysteine 83, cysteine 78–cysteine 95, cysteine 83–cysteine 113, cysteine 93–cysteine 95, cysteine 93–cysteine 106, cysteine 99–cysteine 105, cysteine 106–cysteine 113, cysteine 124–cysteine 170, and cysteine 132–cysteine 344. Residue asparagine 39 is glycosylated (N-linked (GlcNAc...) asparagine). A Cell attachment site motif is present at residues arginine 58 to alanine 60. Residues aspartate 147 and threonine 185 each coordinate a divalent metal cation. Threonine 185 (AMP-threonine intermediate) is an active-site residue. 3 N-linked (GlcNAc...) asparagine glycosylation sites follow: asparagine 216, asparagine 259, and asparagine 270. Residue lysine 271 participates in AMP binding. A divalent metal cation contacts are provided by aspartate 305, histidine 309, aspartate 352, and histidine 353. Histidine 309 is a binding site for AMP. Intrachain disulfides connect cysteine 360–cysteine 457, cysteine 408–cysteine 793, cysteine 541–cysteine 599, cysteine 554–cysteine 654, cysteine 556–cysteine 639, and cysteine 762–cysteine 772. A glycan (N-linked (GlcNAc...) asparagine) is linked at asparagine 405. A divalent metal cation is bound at residue histidine 462. N-linked (GlcNAc...) asparagine glycosylation is found at asparagine 512, asparagine 594, asparagine 674, and asparagine 745.

The protein belongs to the nucleotide pyrophosphatase/phosphodiesterase family. In terms of assembly, monomer cleaved in two subunits; disulfide-linked. Is synthesized as a single-chain protein and is subsequently cleaved to form a two-subunit protein held together with disulfide bonds. A divalent metal cation is required as a cofactor. As to expression, expressed by venom gland.

The protein localises to the secreted. The catalysed reaction is ADP + H2O = AMP + phosphate + H(+). Hydrolyzes ADP with high activity. Shows weak or no activity on 5'-AMP, 5'-GMP, 3'-AMP, ATP, cAMP, and cGMP. Is devoid of monophosphatase and proteinase activities. Dose-dependently inhibits platelet aggregation induced by ADP and collagen. The chain is Venom phosphodiesterase 1 from Crotalus adamanteus (Eastern diamondback rattlesnake).